A 425-amino-acid chain; its full sequence is Serine--tRNA ligase (425 aa).

231–233 contributes to the L-serine binding site; the sequence is TAE. 262–264 is a binding site for ATP; it reads RSE. An L-serine-binding site is contributed by glutamate 285. 349–352 provides a ligand contact to ATP; sequence EISS. Serine 385 is a binding site for L-serine.

This sequence belongs to the class-II aminoacyl-tRNA synthetase family. Type-1 seryl-tRNA synthetase subfamily. Homodimer. The tRNA molecule binds across the dimer.

Its subcellular location is the cytoplasm. The enzyme catalyses tRNA(Ser) + L-serine + ATP = L-seryl-tRNA(Ser) + AMP + diphosphate + H(+). It catalyses the reaction tRNA(Sec) + L-serine + ATP = L-seryl-tRNA(Sec) + AMP + diphosphate + H(+). It participates in aminoacyl-tRNA biosynthesis; selenocysteinyl-tRNA(Sec) biosynthesis; L-seryl-tRNA(Sec) from L-serine and tRNA(Sec): step 1/1. Functionally, catalyzes the attachment of serine to tRNA(Ser). Is also able to aminoacylate tRNA(Sec) with serine, to form the misacylated tRNA L-seryl-tRNA(Sec), which will be further converted into selenocysteinyl-tRNA(Sec). The chain is Serine--tRNA ligase from Exiguobacterium sibiricum (strain DSM 17290 / CCUG 55495 / CIP 109462 / JCM 13490 / 255-15).